The sequence spans 188 residues: MAAQVTTSTDKVLRQPILGSRRFSNMLWASVSAIGGIGFLLAGLSSYFHKNLLGVSDPSNIQFIPQGAALTFYGVAGTLLSAYLWFVFFLDVGGGYNEFNKETGKVTIFRNGFVGKNRIINFQYPLKDILSIRAEIKEGLNPRRVLYLRVKNRGDIPLNRVGEPIPLAELENQGAELARFLTIPLEGL.

The next 2 membrane-spanning stretches (helical) occupy residues 26 to 48 and 68 to 90; these read MLWA…SSYF and AALT…VFFL.

This sequence belongs to the Ycf4 family.

The protein resides in the cellular thylakoid membrane. Its function is as follows. Seems to be required for the assembly of the photosystem I complex. The polypeptide is Photosystem I assembly protein Ycf4 (Picosynechococcus sp. (strain ATCC 27264 / PCC 7002 / PR-6) (Agmenellum quadruplicatum)).